Consider the following 273-residue polypeptide: Aliphatic sulfonates import ATP-binding protein SsuB 2 (273 aa).

Positions 17-241 constitute an ABC transporter domain; that stretch reads LLDLRITRKL…PRDRRDPTLA (225 aa). 50-57 provides a ligand contact to ATP; the sequence is GPSGCGKS.

Belongs to the ABC transporter superfamily. Aliphatic sulfonates importer (TC 3.A.1.17.2) family. The complex is composed of two ATP-binding proteins (SsuB), two transmembrane proteins (SsuC) and a solute-binding protein (SsuA).

It localises to the cell inner membrane. The enzyme catalyses ATP + H2O + aliphatic sulfonate-[sulfonate-binding protein]Side 1 = ADP + phosphate + aliphatic sulfonateSide 2 + [sulfonate-binding protein]Side 1.. Its function is as follows. Part of the ABC transporter complex SsuABC involved in aliphatic sulfonates import. Responsible for energy coupling to the transport system. This chain is Aliphatic sulfonates import ATP-binding protein SsuB 2, found in Burkholderia lata (strain ATCC 17760 / DSM 23089 / LMG 22485 / NCIMB 9086 / R18194 / 383).